The following is a 549-amino-acid chain: Teichoic acids export ATP-binding protein TagH (549 aa).

The ABC transporter domain occupies 22–243 (DKLKDLFFRS…YDEFLKKYNQ (222 aa)). 57-64 (GLNGSGKS) contacts ATP. The tract at residues 244-549 (MSVEERKDLR…EIQSISIVKK (306 aa)) is unknown. The 70-residue stretch at 346–415 (AAKYIVNSNG…ISTKFIEPFK (70 aa)) folds into the SH3b domain.

It belongs to the ABC transporter superfamily. Teichoic acids exporter (TC 3.A.1.104.1) family. In terms of assembly, the complex is composed of two ATP-binding proteins (TagH) and two transmembrane proteins (TagG).

Its subcellular location is the cell membrane. It catalyses the reaction ATP + H2O + teichoic acidSide 1 = ADP + phosphate + teichoic acidSide 2.. Part of the ABC transporter complex TagGH involved in teichoic acids export. Responsible for energy coupling to the transport system. The sequence is that of Teichoic acids export ATP-binding protein TagH from Bacillus anthracis.